The following is a 251-amino-acid chain: Hydroxypyruvate/pyruvate aldolase (251 aa).

His44 functions as the Proton acceptor in the catalytic mechanism. Arg69 contributes to the 3-hydroxypyruvate binding site. Glu145 is a Mg(2+) binding site. 3-hydroxypyruvate contacts are provided by Thr170 and Asp171. Asp171 lines the Mg(2+) pocket.

The protein belongs to the HpcH/HpaI aldolase family. Homohexamer. Trimer of homodimers. Mn(2+) is required as a cofactor. Requires Mg(2+) as cofactor. It depends on Co(2+) as a cofactor. The cofactor is Zn(2+).

The catalysed reaction is D-glyceraldehyde + 3-hydroxypyruvate = 2-dehydro-D-galactonate. It carries out the reaction D-glyceraldehyde + pyruvate = 2-dehydro-3-deoxy-L-galactonate. It catalyses the reaction L-glyceraldehyde + 3-hydroxypyruvate = (3S,4S,5S)-3,4,5,6-tetrahydroxy-2-oxohexanoate. The enzyme catalyses (R)-lactaldehyde + 3-hydroxypyruvate = (3S,4S,5R)-3,4,5-trihydroxy-2-oxohexanoate. The catalysed reaction is (R)-lactaldehyde + 3-hydroxypyruvate = (3S,4R,5R)-3,4,5-trihydroxy-2-oxohexanoate. It carries out the reaction (S)-lactaldehyde + 3-hydroxypyruvate = (3S,4S,5S)-3,4,5-trihydroxy-2-oxohexanoate. It catalyses the reaction D-erythrose + 3-hydroxypyruvate = (3S,4S,5R,6R)-3,4,5,6,7-pentahydroxy-2-oxoheptanoate. Binding of substrate induces a dynamic movement of the metal cofactor between an inactive coordination sphere to a catalytically active one. When oxaloacetate is used as substrate, activity is increased in the presence of micromolar concentrations of inorganic phosphate. The phosphate does not improve the binding of the substrate, but exclusively increases its rate of decarboxylation. Excessive phosphate concentrations negatively affect the reaction rate by removing the metal cofactor. In terms of biological role, aldolase which can catalyze in vitro the aldolisation reaction between hydroxypyruvate (HPA) or pyruvate (PA) and D-glyceraldehyde (D-GA). The condensation of hydroxypyruvate and D-glyceraldehyde produces 2-dehydro-D-galactonate as the major product. The condensation of pyruvate and D-glyceraldehyde produces 2-dehydro-3-deoxy-L-galactonate. Can use other electrophilic substrates such as L-glyceraldehyde, D- and L-lactaldehyde and D-erythrose. Also catalyzes the retro-aldol type decarboxylation of oxaloacetate, a general property of known pyruvate aldolases. This is Hydroxypyruvate/pyruvate aldolase from Rhizorhabdus wittichii (strain DSM 6014 / CCUG 31198 / JCM 15750 / NBRC 105917 / EY 4224 / RW1) (Sphingomonas wittichii).